A 969-amino-acid polypeptide reads, in one-letter code: RNA polymerase-associated protein RapA (969 aa).

Positions 164–334 (EVGRRHAPRV…FARLRLLDSD (171 aa)) constitute a Helicase ATP-binding domain. An ATP-binding site is contributed by 177–184 (DEVGLGKT). The DEAH box motif lies at 280–283 (DEAH). The 177-residue stretch at 492 to 668 (RVNWLLEKLK…GSNEALDDVI (177 aa)) folds into the Helicase C-terminal domain.

The protein belongs to the SNF2/RAD54 helicase family. RapA subfamily. In terms of assembly, interacts with the RNAP. Has a higher affinity for the core RNAP than for the holoenzyme. Its ATPase activity is stimulated by binding to RNAP.

Its function is as follows. Transcription regulator that activates transcription by stimulating RNA polymerase (RNAP) recycling in case of stress conditions such as supercoiled DNA or high salt concentrations. Probably acts by releasing the RNAP, when it is trapped or immobilized on tightly supercoiled DNA. Does not activate transcription on linear DNA. Probably not involved in DNA repair. The chain is RNA polymerase-associated protein RapA from Vibrio vulnificus (strain CMCP6).